A 221-amino-acid polypeptide reads, in one-letter code: GDP-perosamine N-acetyltransferase (221 aa).

The active-site Proton acceptor is H139.

Belongs to the transferase hexapeptide repeat family. In terms of assembly, homotrimer.

The catalysed reaction is GDP-alpha-D-perosamine + acetyl-CoA = GDP-N-acetyl-alpha-D-perosamine + CoA + H(+). It functions in the pathway bacterial outer membrane biogenesis; LPS O-antigen biosynthesis. Catalyzes the transfer of an acetyl residue from acetyl-CoA onto GDP-perosamine to form GDP-N-acetyl-perosamine. The chain is GDP-perosamine N-acetyltransferase from Escherichia coli O157:H7.